The chain runs to 276 residues: 4-diphosphocytidyl-2-C-methyl-D-erythritol kinase (276 aa).

Lys-13 is an active-site residue. Position 94–104 (94–104 (PHAGGIGGGSA)) interacts with ATP. The active site involves Asp-131.

This sequence belongs to the GHMP kinase family. IspE subfamily.

It carries out the reaction 4-CDP-2-C-methyl-D-erythritol + ATP = 4-CDP-2-C-methyl-D-erythritol 2-phosphate + ADP + H(+). It functions in the pathway isoprenoid biosynthesis; isopentenyl diphosphate biosynthesis via DXP pathway; isopentenyl diphosphate from 1-deoxy-D-xylulose 5-phosphate: step 3/6. Catalyzes the phosphorylation of the position 2 hydroxy group of 4-diphosphocytidyl-2C-methyl-D-erythritol. The sequence is that of 4-diphosphocytidyl-2-C-methyl-D-erythritol kinase from Jannaschia sp. (strain CCS1).